We begin with the raw amino-acid sequence, 449 residues long: UDP-N-acetylmuramoylalanine--D-glutamate ligase (449 aa).

Residue 118 to 124 coordinates ATP; that stretch reads GTNGKTT.

This sequence belongs to the MurCDEF family.

The protein resides in the cytoplasm. The enzyme catalyses UDP-N-acetyl-alpha-D-muramoyl-L-alanine + D-glutamate + ATP = UDP-N-acetyl-alpha-D-muramoyl-L-alanyl-D-glutamate + ADP + phosphate + H(+). Its pathway is cell wall biogenesis; peptidoglycan biosynthesis. In terms of biological role, cell wall formation. Catalyzes the addition of glutamate to the nucleotide precursor UDP-N-acetylmuramoyl-L-alanine (UMA). The sequence is that of UDP-N-acetylmuramoylalanine--D-glutamate ligase from Staphylococcus aureus (strain MW2).